The primary structure comprises 100 residues: Integration host factor subunit alpha (100 aa).

The disordered stretch occupies residues 53-72; sequence FDLRDKKQRPGRNPKTGEEI.

It belongs to the bacterial histone-like protein family. In terms of assembly, heterodimer of an alpha and a beta chain.

Its function is as follows. This protein is one of the two subunits of integration host factor, a specific DNA-binding protein that functions in genetic recombination as well as in transcriptional and translational control. This Marinobacter nauticus (strain ATCC 700491 / DSM 11845 / VT8) (Marinobacter aquaeolei) protein is Integration host factor subunit alpha.